Reading from the N-terminus, the 288-residue chain is ATP synthase gamma chain (288 aa).

The protein belongs to the ATPase gamma chain family. In terms of assembly, F-type ATPases have 2 components, CF(1) - the catalytic core - and CF(0) - the membrane proton channel. CF(1) has five subunits: alpha(3), beta(3), gamma(1), delta(1), epsilon(1). CF(0) has three main subunits: a, b and c.

It localises to the cell membrane. Functionally, produces ATP from ADP in the presence of a proton gradient across the membrane. The gamma chain is believed to be important in regulating ATPase activity and the flow of protons through the CF(0) complex. This Symbiobacterium thermophilum (strain DSM 24528 / JCM 14929 / IAM 14863 / T) protein is ATP synthase gamma chain.